Consider the following 263-residue polypeptide: Endonuclease 8 (263 aa).

Pro-2 acts as the Schiff-base intermediate with DNA in catalysis. The active-site Proton donor is Glu-3. Lys-53 acts as the Proton donor; for beta-elimination activity in catalysis. The DNA site is built by Gln-70, Arg-125, and Asn-169. The FPG-type zinc finger occupies 229–263 (KVFHRDGELCERCGGIIEKTTLSSRPFYWCPGCQH). The active-site Proton donor; for delta-elimination activity is Arg-253.

Belongs to the FPG family. Zn(2+) is required as a cofactor.

It carries out the reaction 2'-deoxyribonucleotide-(2'-deoxyribose 5'-phosphate)-2'-deoxyribonucleotide-DNA = a 3'-end 2'-deoxyribonucleotide-(2,3-dehydro-2,3-deoxyribose 5'-phosphate)-DNA + a 5'-end 5'-phospho-2'-deoxyribonucleoside-DNA + H(+). In terms of biological role, involved in base excision repair of DNA damaged by oxidation or by mutagenic agents. Acts as a DNA glycosylase that recognizes and removes damaged bases. Has a preference for oxidized pyrimidines, such as thymine glycol, 5,6-dihydrouracil and 5,6-dihydrothymine. Has AP (apurinic/apyrimidinic) lyase activity and introduces nicks in the DNA strand. Cleaves the DNA backbone by beta-delta elimination to generate a single-strand break at the site of the removed base with both 3'- and 5'-phosphates. This Escherichia coli (strain 55989 / EAEC) protein is Endonuclease 8.